A 138-amino-acid chain; its full sequence is Large ribosomal subunit protein uL16 (138 aa).

Residues 1–14 are compositionally biased toward basic residues; that stretch reads MLQPKRTKYRRTHR. The tract at residues 1-24 is disordered; that stretch reads MLQPKRTKYRRTHRLQHDKGEAHT. Over residues 15–24 the composition is skewed to basic and acidic residues; the sequence is LQHDKGEAHT.

The protein belongs to the universal ribosomal protein uL16 family. In terms of assembly, part of the 50S ribosomal subunit.

Functionally, binds 23S rRNA and is also seen to make contacts with the A and possibly P site tRNAs. This is Large ribosomal subunit protein uL16 from Mycoplasma mobile (strain ATCC 43663 / 163K / NCTC 11711) (Mesomycoplasma mobile).